A 500-amino-acid polypeptide reads, in one-letter code: Cytochrome P450 2D3 (500 aa).

Residue cysteine 446 participates in heme binding.

The protein belongs to the cytochrome P450 family. Heme is required as a cofactor.

It localises to the endoplasmic reticulum membrane. It is found in the microsome membrane. The enzyme catalyses an organic molecule + reduced [NADPH--hemoprotein reductase] + O2 = an alcohol + oxidized [NADPH--hemoprotein reductase] + H2O + H(+). Functionally, cytochromes P450 are a group of heme-thiolate monooxygenases. In liver microsomes, this enzyme is involved in an NADPH-dependent electron transport pathway. It oxidizes a variety of structurally unrelated compounds, including steroids, fatty acids, and xenobiotics. This chain is Cytochrome P450 2D3 (Cyp2d3), found in Rattus norvegicus (Rat).